The primary structure comprises 400 residues: Carnosine N-methyltransferase (400 aa).

A disordered region spans residues 1–49 (MQRRRRAPPASQPAQDSGHSEEVEVQFSAGRLGSAAPAGPPVRGTAEDE). S-adenosyl-L-methionine-binding residues include glutamine 155, arginine 158, glycine 199, glutamate 220, aspartate 286, phenylalanine 287, and cysteine 303. Carnosine is bound at residue aspartate 307. Tyrosine 315 lines the S-adenosyl-L-methionine pocket. Carnosine is bound by residues histidine 338 and tyrosine 389.

The protein belongs to the carnosine N-methyltransferase family. In terms of assembly, homodimer. Each monomer accommodates one molecule of carnosine in its active pocket, precisely anchoring the histidine imidazole ring such that only N1 is exposed and deprotonated for methylation. As to expression, expressed at higher level in skeletal muscle compared to other tissues.

The protein localises to the cytoplasm. It localises to the cytosol. The protein resides in the nucleus. The catalysed reaction is carnosine + S-adenosyl-L-methionine = anserine + S-adenosyl-L-homocysteine + H(+). In terms of biological role, N-methyltransferase that catalyzes the formation of anserine (beta-alanyl-N(Pi)-methyl-L-histidine) from carnosine. Anserine, a methylated derivative of carnosine (beta-alanyl-L-histidine), is an abundant constituent of vertebrate skeletal muscles. Also methylates other L-histidine-containing di- and tripeptides such as Gly-Gly-His, Gly-His and homocarnosine (GABA-His). The chain is Carnosine N-methyltransferase from Rattus norvegicus (Rat).